We begin with the raw amino-acid sequence, 908 residues long: 26S proteasome non-ATPase regulatory subunit 2 (908 aa).

Met-1 carries the post-translational modification N-acetylmethionine. Residues 1–51 (MEEGGRDKTPVQSQQPSATAPSGADEKSSGKERRDAGEKDKEQELSEEDKQ) are disordered. Thr-9 bears the Phosphothreonine mark. The segment covering 10-20 (PVQSQQPSATA) has biased composition (polar residues). Over residues 24–51 (ADEKSSGKERRDAGEKDKEQELSEEDKQ) the composition is skewed to basic and acidic residues. Phosphoserine is present on residues Ser-29 and Ser-147. Residue Tyr-194 is modified to Phosphotyrosine. Phosphoserine occurs at positions 361 and 363. PC repeat units follow at residues 409–442 (SAAA…YIKS), 443–479 (GALL…TMRL), 480–514 (GSIF…SMEV), 517–551 (VTAL…TELK), and 560–589 (LGLG…PFRS). Lys-551 bears the N6-acetyllysine mark. Over residues 623-643 (KEKEEDKDKKEKKDKDKKEAP) the composition is skewed to basic and acidic residues. The segment at 623–645 (KEKEEDKDKKEKKDKDKKEAPAD) is disordered. 2 PC repeats span residues 692 to 723 (LALA…EVSY) and 742 to 757 (AAML…KDPN). The interval 708 to 903 (DTLSKFSHDA…LEGFVILRKN (196 aa)) is required for interaction with UBLCP1.

It belongs to the proteasome subunit S2 family. As to quaternary structure, component of the 19S proteasome regulatory particle complex. The 26S proteasome consists of a 20S core particle (CP) and two 19S regulatory subunits (RP). The regulatory particle is made of a lid composed of 9 subunits, a base containing 6 ATPases and few additional components including PSMD2. Interacts with RPGRIP1L. Interacts with CRY1 in a KDM8-dependent manner. Interacts (via C-terminus) with phosphatase UBLCP1 (via ubiquitin-like domain); the interaction recruits UBLCP1 to the 19S regulatory particle where it dephosphorylates 19S subunit PSMC2/RPT1 which impairs PSMC2 ATPase activity and disrupts 26S proteasome assembly.

In terms of biological role, component of the 26S proteasome, a multiprotein complex involved in the ATP-dependent degradation of ubiquitinated proteins. This complex plays a key role in the maintenance of protein homeostasis by removing misfolded or damaged proteins, which could impair cellular functions, and by removing proteins whose functions are no longer required. Therefore, the proteasome participates in numerous cellular processes, including cell cycle progression, apoptosis, or DNA damage repair. Functionally, binds to the intracellular domain of tumor necrosis factor type 1 receptor. The binding domain of TRAP1 and TRAP2 resides outside the death domain of TNFR1. In Rattus norvegicus (Rat), this protein is 26S proteasome non-ATPase regulatory subunit 2 (Psmd2).